The chain runs to 99 residues: Large ribosomal subunit protein uL23 (99 aa).

This sequence belongs to the universal ribosomal protein uL23 family. In terms of assembly, part of the 50S ribosomal subunit. Contacts protein L29, and trigger factor when it is bound to the ribosome.

Functionally, one of the early assembly proteins it binds 23S rRNA. One of the proteins that surrounds the polypeptide exit tunnel on the outside of the ribosome. Forms the main docking site for trigger factor binding to the ribosome. In Stenotrophomonas maltophilia (strain R551-3), this protein is Large ribosomal subunit protein uL23.